The chain runs to 131 residues: Small ribosomal subunit protein uS8 (131 aa).

This sequence belongs to the universal ribosomal protein uS8 family. As to quaternary structure, part of the 30S ribosomal subunit. Contacts proteins S5 and S12.

Functionally, one of the primary rRNA binding proteins, it binds directly to 16S rRNA central domain where it helps coordinate assembly of the platform of the 30S subunit. This chain is Small ribosomal subunit protein uS8, found in Halorhodospira halophila (strain DSM 244 / SL1) (Ectothiorhodospira halophila (strain DSM 244 / SL1)).